The sequence spans 609 residues: Chaperone protein DnaK (609 aa).

A Phosphothreonine; by autocatalysis modification is found at threonine 173. Residues glutamine 580–lysine 609 form a disordered region. Residues valine 598–lysine 609 are compositionally biased toward acidic residues.

The protein belongs to the heat shock protein 70 family.

Acts as a chaperone. This chain is Chaperone protein DnaK, found in Brevibacillus brevis (strain 47 / JCM 6285 / NBRC 100599).